The primary structure comprises 239 residues: Purine nucleoside phosphorylase DeoD-type (239 aa).

His-5 serves as a coordination point for a purine D-ribonucleoside. Phosphate is bound by residues Gly-21, Arg-25, Arg-44, and Arg-88–Ser-91. A purine D-ribonucleoside is bound by residues Glu-180 to Glu-182 and Ser-204 to Asp-205. Catalysis depends on Asp-205, which acts as the Proton donor.

Belongs to the PNP/UDP phosphorylase family. As to quaternary structure, homohexamer; trimer of homodimers.

The enzyme catalyses a purine D-ribonucleoside + phosphate = a purine nucleobase + alpha-D-ribose 1-phosphate. The catalysed reaction is a purine 2'-deoxy-D-ribonucleoside + phosphate = a purine nucleobase + 2-deoxy-alpha-D-ribose 1-phosphate. In terms of biological role, catalyzes the reversible phosphorolytic breakdown of the N-glycosidic bond in the beta-(deoxy)ribonucleoside molecules, with the formation of the corresponding free purine bases and pentose-1-phosphate. The protein is Purine nucleoside phosphorylase DeoD-type of Yersinia pestis bv. Antiqua (strain Antiqua).